A 92-amino-acid chain; its full sequence is MARSVWKGPFVDGYLLKKAEAARGSTRSEVIKIWSRRSTILPQFVGLTFGVYNGQKHIPVYVSEEMVGHKFGEFSPTRTFHGHAADKKAKRR.

Belongs to the universal ribosomal protein uS19 family.

Functionally, protein S19 forms a complex with S13 that binds strongly to the 16S ribosomal RNA. This is Small ribosomal subunit protein uS19 from Methylobacterium nodulans (strain LMG 21967 / CNCM I-2342 / ORS 2060).